The following is a 215-amino-acid chain: Protein Ac34 (215 aa).

As to quaternary structure, interacts with host proteins P40, P34 ands P20.

Its subcellular location is the host nucleus. Plays a role in the translocation of the P40 subunit of host Arp2/3 to the nucleus. The robust nuclear accumulation of Arp2/3 induces nuclear actin polymerization to assist in virus replication. Mechanistically, subverts the host CRM1-dependent nuclear export pathway leading to Arp2/3 acumulation in the host nucleus. This is Protein Ac34 (Ac34) from Autographa californica nuclear polyhedrosis virus (AcMNPV).